The primary structure comprises 513 residues: Varicidin biosynthesis cluster-specific transcription factor (513 aa).

Positions 16–54 form a DNA-binding region, zn(2)-C6 fungal-type; sequence CERCRLHKLKCTILPQKRFEGPQEAPEQCTRCARAKAKC. Disordered stretches follow at residues 58–92 and 97–116; these read RRAP…MQPN and VSSH…SSLK. Residues 67–76 show a composition bias toward low complexity; it reads SSSNDRSSVS. A compositionally biased stretch (polar residues) spans 77 to 92; it reads KGINSTTPATRTMQPN.

Its subcellular location is the nucleus. In terms of biological role, transcription factor that regulates the expression of the gene cluster that mediates the biosynthesis of varicidin A, an antifungal natural product containing a cis-octahydrodecalin core. The protein is Varicidin biosynthesis cluster-specific transcription factor of Talaromyces variabilis (Penicillium variabile).